A 193-amino-acid polypeptide reads, in one-letter code: ATP-dependent Clp protease proteolytic subunit 2 (193 aa).

Ser-98 (nucleophile) is an active-site residue. His-123 is a catalytic residue.

It belongs to the peptidase S14 family. Fourteen ClpP subunits assemble into 2 heptameric rings which stack back to back to give a disk-like structure with a central cavity, resembling the structure of eukaryotic proteasomes.

Its subcellular location is the cytoplasm. The catalysed reaction is Hydrolysis of proteins to small peptides in the presence of ATP and magnesium. alpha-casein is the usual test substrate. In the absence of ATP, only oligopeptides shorter than five residues are hydrolyzed (such as succinyl-Leu-Tyr-|-NHMec, and Leu-Tyr-Leu-|-Tyr-Trp, in which cleavage of the -Tyr-|-Leu- and -Tyr-|-Trp bonds also occurs).. Cleaves peptides in various proteins in a process that requires ATP hydrolysis. Has a chymotrypsin-like activity. Plays a major role in the degradation of misfolded proteins. This is ATP-dependent Clp protease proteolytic subunit 2 from Bacillus cereus (strain ATCC 10987 / NRS 248).